Reading from the N-terminus, the 122-residue chain is Large ribosomal subunit protein uL14 (122 aa).

The protein belongs to the universal ribosomal protein uL14 family. As to quaternary structure, part of the 50S ribosomal subunit. Forms a cluster with proteins L3 and L19. In the 70S ribosome, L14 and L19 interact and together make contacts with the 16S rRNA in bridges B5 and B8.

In terms of biological role, binds to 23S rRNA. Forms part of two intersubunit bridges in the 70S ribosome. This Burkholderia vietnamiensis (strain G4 / LMG 22486) (Burkholderia cepacia (strain R1808)) protein is Large ribosomal subunit protein uL14.